The primary structure comprises 319 residues: MNLMRTAMLLAFMTVLFMAVGYVIGGRGGMMIALVIAAGMNFFSYWNSDRMVLRMYRAQEVDEHSAPEYYGIVRDLAKNAGLPMPRVYVIDSPQPNAFATGRNPENAAVAASTGLLHSLSYEEVAGVMAHELAHIQYRDTLTMTLTATLAGAISMLGNFAFFFGGNRENNNPLGFIGVLIAMIVAPLAAMLVQMAISRTREYSADRRGAEICGNPLWLSSALRKIAGAAQVIHNNDAERNPATAHMFIINPLSGERMDNLFSTHPNTENRVAALERMARETSTGSTAPVRPDNAGRKSRSVPRTGWGRGGSEPPKGPWS.

A run of 2 helical transmembrane segments spans residues 6–26 (TAML…VIGG) and 28–48 (GGMM…YWNS). Histidine 130 contacts Zn(2+). Glutamate 131 is a catalytic residue. A Zn(2+)-binding site is contributed by histidine 134. 2 consecutive transmembrane segments (helical) span residues 145–165 (LTAT…FFGG) and 172–192 (PLGF…AMLV). Residue glutamate 201 coordinates Zn(2+). The tract at residues 277–319 (MARETSTGSTAPVRPDNAGRKSRSVPRTGWGRGGSEPPKGPWS) is disordered.

It belongs to the peptidase M48B family. Zn(2+) is required as a cofactor.

It localises to the cell inner membrane. In Rhizobium meliloti (strain 1021) (Ensifer meliloti), this protein is Protease HtpX homolog.